A 287-amino-acid polypeptide reads, in one-letter code: MTVIACLREILSTARRTAVAEGASDAPASRVVLVPTMGALHEGHVRLVNHARDLGGIVVVSIFVNPLQFGPGEDLDRYPRTLDADVALLDGLADVVFAPAAAEMYPQGESSTRVTAGAVGGLFEGASRPGHFDGMLTVVAKLFGIAQPDVAVFGQKDAQQVHLVGRMVDDLNLPVTIAVVDTVREPDGLALSSRNRYLDADARAAAATLSRALADGVAACAGGAAAVLTAARVRVEAEPVVRLDYLVIVDQGTFREVAPNYHGPAFLLIAARVGSTRLIDNERITLP.

Residue 37–44 (MGALHEGH) coordinates ATP. His-44 functions as the Proton donor in the catalytic mechanism. Gln-68 serves as a coordination point for (R)-pantoate. Gln-68 provides a ligand contact to beta-alanine. 154–157 (GQKD) contributes to the ATP binding site. Residue Gln-160 participates in (R)-pantoate binding. ATP-binding positions include Val-183 and 191 to 194 (LSSR).

The protein belongs to the pantothenate synthetase family. In terms of assembly, homodimer.

Its subcellular location is the cytoplasm. It carries out the reaction (R)-pantoate + beta-alanine + ATP = (R)-pantothenate + AMP + diphosphate + H(+). The protein operates within cofactor biosynthesis; (R)-pantothenate biosynthesis; (R)-pantothenate from (R)-pantoate and beta-alanine: step 1/1. Catalyzes the condensation of pantoate with beta-alanine in an ATP-dependent reaction via a pantoyl-adenylate intermediate. The chain is Pantothenate synthetase from Leifsonia xyli subsp. xyli (strain CTCB07).